A 96-amino-acid polypeptide reads, in one-letter code: uncharacterized protein (96 aa).

The first 23 residues, 1–23 (MKQFYSVVLTIIIYISSQSNVVS), serve as a signal peptide directing secretion. Disulfide bonds link C60–C74, C67–C78, and C73–C83.

It localises to the secreted. This is an uncharacterized protein from Schistosoma japonicum (Blood fluke).